Reading from the N-terminus, the 1046-residue chain is uncharacterized protein (1046 aa).

Residues 594-615 show a composition bias toward low complexity; sequence LNSIPSDSSSSGSSRKSSPRGS. The disordered stretch occupies residues 594 to 622; it reads LNSIPSDSSSSGSSRKSSPRGSPNLGEAP.

This is an uncharacterized protein from Invertebrate iridescent virus 6 (IIV-6).